We begin with the raw amino-acid sequence, 144 residues long: Large ribosomal subunit protein uL15 (144 aa).

The tract at residues 1 to 52 is disordered; sequence MRLNTLSPAEGAKHAPKRVGRGIGSGLGKTAGRGHKGQNSRSGGGVRRGFEG. The segment covering 21–31 has biased composition (gly residues); sequence RGIGSGLGKTA.

The protein belongs to the universal ribosomal protein uL15 family. As to quaternary structure, part of the 50S ribosomal subunit.

Its function is as follows. Binds to the 23S rRNA. The sequence is that of Large ribosomal subunit protein uL15 from Yersinia enterocolitica serotype O:8 / biotype 1B (strain NCTC 13174 / 8081).